A 276-amino-acid polypeptide reads, in one-letter code: Large ribosomal subunit protein uL2 (276 aa).

The interval 203-276 is disordered; sequence NVSSGKAGRT…SDKFIVKRRK (74 aa). The segment covering 210–220 has biased composition (basic residues); the sequence is GRTRWLGRRPQ. The span at 265 to 276 shows a compositional bias: basic and acidic residues; that stretch reads KPSDKFIVKRRK.

This sequence belongs to the universal ribosomal protein uL2 family. As to quaternary structure, part of the 50S ribosomal subunit. Forms a bridge to the 30S subunit in the 70S ribosome.

Its function is as follows. One of the primary rRNA binding proteins. Required for association of the 30S and 50S subunits to form the 70S ribosome, for tRNA binding and peptide bond formation. It has been suggested to have peptidyltransferase activity; this is somewhat controversial. Makes several contacts with the 16S rRNA in the 70S ribosome. The sequence is that of Large ribosomal subunit protein uL2 from Coprothermobacter proteolyticus (strain ATCC 35245 / DSM 5265 / OCM 4 / BT).